The sequence spans 539 residues: Putative cysteine ligase BshC (539 aa).

Residues serine 146 and 384 to 386 (ERH) each bind ADP. Positions 455–475 (LLKNAAFIQDQLQFLERTVMK) form a coiled coil. ADP contacts are provided by residues 490 to 493 (RIQN), tryptophan 506, and tyrosine 510.

Belongs to the BshC family. In terms of assembly, homodimer in solution.

Involved in bacillithiol (BSH) biosynthesis. May catalyze the last step of the pathway, the addition of cysteine to glucosamine malate (GlcN-Mal) to generate BSH. The polypeptide is Putative cysteine ligase BshC (Bacillus subtilis (strain 168)).